Reading from the N-terminus, the 412-residue chain is Multifunctional CCA protein (412 aa).

2 residues coordinate ATP: glycine 8 and arginine 11. CTP contacts are provided by glycine 8 and arginine 11. Aspartate 21 and aspartate 23 together coordinate Mg(2+). ATP contacts are provided by arginine 91, arginine 137, and arginine 140. CTP contacts are provided by arginine 91, arginine 137, and arginine 140. One can recognise an HD domain in the interval 228 to 329; that stretch reads TGIHTLMTLS…VKLFDSIDAW (102 aa).

This sequence belongs to the tRNA nucleotidyltransferase/poly(A) polymerase family. Bacterial CCA-adding enzyme type 1 subfamily. As to quaternary structure, monomer. Can also form homodimers and oligomers. Mg(2+) serves as cofactor. Ni(2+) is required as a cofactor.

The catalysed reaction is a tRNA precursor + 2 CTP + ATP = a tRNA with a 3' CCA end + 3 diphosphate. It catalyses the reaction a tRNA with a 3' CCA end + 2 CTP + ATP = a tRNA with a 3' CCACCA end + 3 diphosphate. Functionally, catalyzes the addition and repair of the essential 3'-terminal CCA sequence in tRNAs without using a nucleic acid template. Adds these three nucleotides in the order of C, C, and A to the tRNA nucleotide-73, using CTP and ATP as substrates and producing inorganic pyrophosphate. tRNA 3'-terminal CCA addition is required both for tRNA processing and repair. Also involved in tRNA surveillance by mediating tandem CCA addition to generate a CCACCA at the 3' terminus of unstable tRNAs. While stable tRNAs receive only 3'-terminal CCA, unstable tRNAs are marked with CCACCA and rapidly degraded. The polypeptide is Multifunctional CCA protein (Escherichia coli O7:K1 (strain IAI39 / ExPEC)).